We begin with the raw amino-acid sequence, 401 residues long: Large ribosomal subunit protein uL3 (401 aa).

The interval 1-22 (MSHRKFSAPRHGHMGFTPKKRS) is disordered.

This sequence belongs to the universal ribosomal protein uL3 family.

Its subcellular location is the cytoplasm. Functionally, the L3 protein is a component of the large subunit of cytoplasmic ribosomes. This is Large ribosomal subunit protein uL3 (rpl-3) from Caenorhabditis elegans.